Reading from the N-terminus, the 401-residue chain is Chalcone synthase 4 (401 aa).

Residue Cys-168 is part of the active site.

Belongs to the thiolase-like superfamily. Chalcone/stilbene synthases family.

It catalyses the reaction (E)-4-coumaroyl-CoA + 3 malonyl-CoA + 3 H(+) = 2',4,4',6'-tetrahydroxychalcone + 3 CO2 + 4 CoA. Its pathway is secondary metabolite biosynthesis; flavonoid biosynthesis. Its function is as follows. The primary product of this enzyme is 4,2',4',6'-tetrahydroxychalcone (also termed naringenin-chalcone or chalcone) which can under specific conditions spontaneously isomerize into naringenin. The chain is Chalcone synthase 4 (CHS4) from Sorghum bicolor (Sorghum).